Reading from the N-terminus, the 282-residue chain is tRNA (adenine(57)-N(1)/adenine(58)-N(1))-methyltransferase TrmI (282 aa).

S-adenosyl-L-methionine-binding positions include 98–101 (SGAL), Asp-119, Asp-172, and Asp-188.

It belongs to the class I-like SAM-binding methyltransferase superfamily. TRM61 family. As to quaternary structure, homotetramer composed of a dimer of dimers.

It catalyses the reaction adenosine(57)/adenosine(58) in tRNA + 2 S-adenosyl-L-methionine = N(1)-methyladenosine(57)/N(1)-methyladenosine(58) in tRNA + 2 S-adenosyl-L-homocysteine + 2 H(+). Its function is as follows. Catalyzes the S-adenosyl-L-methionine-dependent formation of N(1)-methyladenine at position 58 (m1A58) in tRNA. This chain is tRNA (adenine(57)-N(1)/adenine(58)-N(1))-methyltransferase TrmI (trmI), found in Methanocaldococcus jannaschii (strain ATCC 43067 / DSM 2661 / JAL-1 / JCM 10045 / NBRC 100440) (Methanococcus jannaschii).